The following is a 312-amino-acid chain: Non-structural protein 2 (312 aa).

ATP is bound by residues 107-109 (QVR), lysine 185, and 218-220 (HGK). Positions 202–238 (FAAYIRYNFNKFAAISHGKRHWRLVLHSQLMSHAERL) are RNA-binding. Catalysis depends on histidine 222, which acts as the For NTPase and RTPase activities. Arginine 224 lines the ATP pocket.

The protein belongs to the rotavirus NSP2 family. Homooctamer. Interacts with VP1; this interaction is weak. Interacts with NSP5; this interaction leads to up-regulation of NSP5 phosphorylation and formation of viral factories. Interacts with host DCP1A, DCP1B, DDX6, EDC4 and EIF2S1/eIF2-alpha; these interactions are probably part of the sequestration of some host SGs and PBs proteins in viral factories. The cofactor is Mg(2+).

It is found in the host cytoplasm. Its function is as follows. Participates in replication and packaging of the viral genome. Plays a crucial role, together with NSP5, in the formation of virus factories (viroplasms), which are large inclusions in the host cytoplasm where replication intermediates are assembled and viral RNA replication takes place. Displays ssRNA binding, NTPase, RNA triphosphatase (RTPase) and ATP-independent helix-unwinding activities. The unwinding activity may prepare and organize plus-strand RNAs for packaging and replication by removing interfering secondary structures. The RTPase activity plays a role in the removal of the gamma-phosphate from the rotavirus RNA minus strands of dsRNA genome segments. Participates in the selective exclusion of host proteins from stress granules (SG) and P bodies (PB). Also participates in the sequestration of these remodeled organelles in viral factories. In Rotavirus C (isolate RVC/Human/United Kingdom/Bristol/1989) (RV-C), this protein is Non-structural protein 2.